We begin with the raw amino-acid sequence, 966 residues long: MANFQEHLSCSSSPHLPFSESKTFNGLQDELTAMGNHPSPKLLEDQQEKGMVRTELIESVHSPVTTTVLTSVSEDSRDQFENSVLQLREHDESETAVSQGNSNTVDGESTSGTEDIKIQFSRSGSGSGGFLEGLFGCLRPVWNIIGKAYSTDYKLQQQDTWEVPFEEISELQWLGSGAQGAVFLGKFRAEEVAIKKVREQNETDIKHLRKLKHPNIIAFKGVCTQAPCYCIIMEYCAHGQLYEVLRAGRKITPRLLVDWSTGIASGMNYLHLHKIIHRDLKSPNVLVTHTDAVKISDFGTSKELSDKSTKMSFAGTVAWMAPEVIRNEPVSEKVDIWSFGVVLWELLTGEIPYKDVDSSAIIWGVGSNSLHLPVPSTCPDGFKILMKQTWQSKPRNRPSFRQTLMHLDIASADVLATPQETYFKSQAEWREEVKKHFEKIKSEGTCIHRLDEELIRRRREELRHALDIREHYERKLERANNLYMELSAIMLQLEMREKELIKREQAVEKKYPGTYKRHPVRPIIHPNAMEKLMKRKGVPHKSGMQTKRPDLLRSEGIPTTEVAPTASPLSGSPKMSTSSSKSRYRSKPRHRRGNSRGSHSDFAAILKNQPAQENSPHPTYLHQAQSQYPSLHHHNSLQQQYQQPPPAMSQSHHPRLNMHGQDIATCANNLRYFGPAAALRSPLSNHAQRQLPGSSPDLISTAMAADCWRSSEPDKGQAGPWGCCQADAYDPCLQCRPEQYGSLDIPSAEPVGRSPDLSKSPAHNPLLENAQSSEKTEENEFSGCRSESSLGTSHLGTPPALPRKTRPLQKSGDDSSEEEEGEVDSEVEFPRRQRPHRCISSCQSYSTFSSENFSVSDGEEGNTSDHSNSPDELADKLEDRLAEKLDDLLSQTPEIPIDISSHSDGLSDKECAVRRVKTQMSLGKLCVEERGYENPMQFEESDCDSSDGECSDATVRTNKHYSSATW.

Disordered regions lie at residues 1-22 (MANF…SESK), 30-49 (ELTA…QQEK), and 90-114 (HDES…SGTE). Residues 95–113 (TAVSQGNSNTVDGESTSGT) are compositionally biased toward polar residues. Residues 168-409 (ISELQWLGSG…FRQTLMHLDI (242 aa)) form the Protein kinase domain. Residues 174–182 (LGSGAQGAV) and lysine 195 contribute to the ATP site. The active-site Proton acceptor is the aspartate 279. Leucine-zipper stretches follow at residues 433-454 (VKKH…DEEL) and 486-507 (LSAI…EQAV). 4 disordered regions span residues 534–599 (KRKG…RGSH), 611–655 (AQEN…HHPR), 744–834 (DIPS…RRQR), and 846–908 (STFS…GLSD). A compositionally biased stretch (low complexity) spans 567-581 (SPLSGSPKMSTSSSK). Residues 582–594 (SRYRSKPRHRRGN) show a composition bias toward basic residues. Polar residues-rich tracts occupy residues 611–629 (AQEN…SQYP) and 785–795 (RSESSLGTSHL). The segment covering 814 to 827 (DSSEEEEGEVDSEV) has biased composition (acidic residues). The acidic stretch occupies residues 815–828 (SSEEEEGEVDSEVE). Residues 846–855 (STFSSENFSV) show a composition bias toward polar residues. Residues 873–887 (LADKLEDRLAEKLDD) are compositionally biased toward basic and acidic residues.

This sequence belongs to the protein kinase superfamily. STE Ser/Thr protein kinase family. MAP kinase kinase kinase subfamily. Homodimer; forms dimers through the leucine-zipper motif. Interacts with the C-terminus of MAPK8IP1 through the kinase catalytic domain. Binds PRDX3. Associates with the IKK complex through the kinase domain. It depends on Mg(2+) as a cofactor. Post-translationally, autophosphorylated on serine and threonine residues. As to expression, expressed in the adult brain, liver, placenta and pancreas, with expression strongest in the pancreas.

Its subcellular location is the cytoplasm. It localises to the membrane. The catalysed reaction is L-seryl-[protein] + ATP = O-phospho-L-seryl-[protein] + ADP + H(+). The enzyme catalyses L-threonyl-[protein] + ATP = O-phospho-L-threonyl-[protein] + ADP + H(+). Its activity is regulated as follows. Activated by autophosphorylation and homodimerization. Its function is as follows. Activates the JUN N-terminal pathway through activation of the MAP kinase kinase MAP2K7. Acts synergistically with PRDX3 to regulate the activation of NF-kappa-B in the cytosol. This activation is kinase-dependent and involves activating the IKK complex, the IKBKB-containing complex that phosphorylates inhibitors of NF-kappa-B. In Homo sapiens (Human), this protein is Mitogen-activated protein kinase kinase kinase 13.